Here is a 154-residue protein sequence, read N- to C-terminus: Superoxide dismutase [Cu-Zn] (154 aa).

Cu cation is bound by residues His45, His47, and His62. Cys56 and Cys146 are disulfide-bonded. Zn(2+) contacts are provided by His62, His70, His79, and Asp82. His120 lines the Cu cation pocket.

This sequence belongs to the Cu-Zn superoxide dismutase family. In terms of assembly, homodimer. Cu cation is required as a cofactor. Requires Zn(2+) as cofactor.

The protein resides in the cytoplasm. The enzyme catalyses 2 superoxide + 2 H(+) = H2O2 + O2. Destroys radicals which are normally produced within the cells and which are toxic to biological systems. This Bombyx mori (Silk moth) protein is Superoxide dismutase [Cu-Zn].